The following is a 215-amino-acid chain: UPF0502 protein YceH (215 aa).

K80 bears the N6-acetyllysine mark.

The protein belongs to the UPF0502 family.

This chain is UPF0502 protein YceH, found in Escherichia coli (strain K12 / MC4100 / BW2952).